Reading from the N-terminus, the 2376-residue chain is Cell morphogenesis protein PAG1 (2376 aa).

The interval 1–30 (MASRFTFPPQRDQGIGFTFPPTNKAEGSSN) is disordered. S141 carries the post-translational modification Phosphoserine. The tract at residues 275 to 294 (SSSNTTSKYKHNNNTNNLPG) is disordered. Residue S1144 is modified to Phosphoserine. T2264 is modified (phosphothreonine). S2267 and S2355 each carry phosphoserine.

To S.pombe mor2. As to quaternary structure, associates with CBK1.

Its function is as follows. Seems to play a role in cell morphogenesis. In Saccharomyces cerevisiae (strain ATCC 204508 / S288c) (Baker's yeast), this protein is Cell morphogenesis protein PAG1 (TAO3).